The following is a 564-amino-acid chain: Protein glycosylation K (564 aa).

The Cytoplasmic segment spans residues 1-15 (MLKKLFFILSKEDKN). Residues 16–38 (FLFFLLVFSVFISFIETFAISLV) form a helical membrane-spanning segment. The ABC transmembrane type-1 domain maps to 17–319 (LFFLLVFSVF…IITSYHDLLY (303 aa)). Over 39 to 76 (MPFITLASDFSYFDRNKYLISLKEYLNIPVFEIIVYFG) the chain is Extracellular. Residues 46–67 (SDFSYFDRNKYLISLKEYLNIP) form an important for stimulation of ATPase activity by lipid-linked oligosaccharides and subsequent translocation of lipid-linked oligosaccharides region. A helical membrane pass occupies residues 77-98 (VGLIVFYVFRALLNAYYFHLLA). Residues 99-149 (RFSKGRYHAIAYKVFSKFLNINYEKFTQKNQSEILKSITGEVYNLSTMISS) lie on the Cytoplasmic side of the membrane. Residues 150-170 (FLLLMSEIFVVLLLYALMLLI) form a helical membrane-spanning segment. Over 171-173 (NYK) the chain is Extracellular. A helical transmembrane segment spans residues 174–197 (ITLFLSIFMVLNAFILVKILSPII). Residues 198–254 (KKAGVRREEAMKNFFEILNTNLNNFKFIKLKTKEDGVLSLFKAQSEAFSKANITNES) are Cytoplasmic-facing. The chain crosses the membrane as a helical span at residues 255 to 276 (VAAVPRIYLEGIGFCVLVFIVV). The Extracellular segment spans residues 277-292 (FLVLKNESDISGILST). Residues 293 to 314 (ISIFVLALYRLMPSANRIITSY) form a helical membrane-spanning segment. Residues 315 to 564 (HDLLYYHSSL…LEHGKLKEEK (250 aa)) lie on the Cytoplasmic side of the membrane. In terms of domain architecture, ABC transporter spans 349–564 (LKICNLSFGY…LEHGKLKEEK (216 aa)). 382 to 389 (GESGCGKS) is an ATP binding site.

The protein belongs to the ABC transporter superfamily. As to quaternary structure, homodimer; domain-swapped. Helices that arise in transmembrane regions 4 and 5 from one subunit cross over and contact the nucleotide-binding domain from the other subunit.

It is found in the cell inner membrane. The catalysed reaction is ATP + H2O + lipopolysaccharideSide 1 = ADP + phosphate + lipopolysaccharideSide 2.. The protein operates within protein modification; protein glycosylation. Mediates the ATP-dependent translocation of the undecaprenylpyrophosphate-linked heptasaccharide intermediate across the cell membrane; this is an essential step during the N-linked protein glycosylation pathway. Transport across the membrane is effected via ATP-driven conformation changes. Most likely, only the polar and charged part of the glycolipid enter the substrate-binding cavity, and the lipid tail remains exposed to the membrane lipids during the transmembrane flipping process. The chain is Protein glycosylation K (pglK) from Campylobacter jejuni subsp. jejuni serotype O:2 (strain ATCC 700819 / NCTC 11168).